Here is a 159-residue protein sequence, read N- to C-terminus: Phosphopantetheine adenylyltransferase (159 aa).

Thr9 lines the substrate pocket. Residues 9–10 and His17 each bind ATP; that span reads TF. Positions 41, 73, and 87 each coordinate substrate. ATP-binding positions include 88 to 90, Glu98, and 123 to 129; these read GLR and YSFISST.

It belongs to the bacterial CoaD family. In terms of assembly, homohexamer. The cofactor is Mg(2+).

The protein resides in the cytoplasm. The catalysed reaction is (R)-4'-phosphopantetheine + ATP + H(+) = 3'-dephospho-CoA + diphosphate. It functions in the pathway cofactor biosynthesis; coenzyme A biosynthesis; CoA from (R)-pantothenate: step 4/5. Reversibly transfers an adenylyl group from ATP to 4'-phosphopantetheine, yielding dephospho-CoA (dPCoA) and pyrophosphate. The polypeptide is Phosphopantetheine adenylyltransferase (Pseudomonas putida (strain ATCC 700007 / DSM 6899 / JCM 31910 / BCRC 17059 / LMG 24140 / F1)).